The following is a 618-amino-acid chain: MKQSKLLIPTLREMPSDAQVISHALMVRAGYVRQVSAGIYAYLPLANRTIEKFKTIMREEFEKIGAVEMLAPALLTADLWRESGRYETYGEDLYKLKNRDNSDFILGPTHEETFTTLVRNAVKSYKQLPLNLYQIQSKYRDEKRPRNGLLRTREFIMKDGYSFHHNYEDLDVTYEDYRQAYEAIFTRAGLDFKGIIGDGGAMGGKDSQEFMAITPARTDLDRWVVLDKSIASMDDIPKEVLEEIKAELAAWMISGEDTIAYSTESSYAANLEMATNEYKPSSKVAAEDALVEVETPHCKTIDEVAAFLSVDETQTIKTLLFVADNEPVVALLVGNDHINTVKLKNYLAADFLEPASEEEARAFFGAGFGSLGPVNLAQGSRIVADRKVQNLTNAVAGANKDGFHVTGVNPGRDFQAEYVDIREVKEGEMSPDGHGVLQFARGIEVGHIFKLGTRYSDSMGATILDENGRAVPIVMGCYGIGVSRILSAVIEQHARLFVNKTPKGDYRYAWGINFPKELAPFDVHLITVNVKDQVAQDLTAKLEADLMAKGYDVLTDDRNERVGSKFSDSDLIGLPIRVTVGKKAAEGIVEIKIKATGDSIEVNAENLIETLEILTKEH.

Belongs to the class-II aminoacyl-tRNA synthetase family. ProS type 1 subfamily. As to quaternary structure, homodimer.

It is found in the cytoplasm. It carries out the reaction tRNA(Pro) + L-proline + ATP = L-prolyl-tRNA(Pro) + AMP + diphosphate. Catalyzes the attachment of proline to tRNA(Pro) in a two-step reaction: proline is first activated by ATP to form Pro-AMP and then transferred to the acceptor end of tRNA(Pro). As ProRS can inadvertently accommodate and process non-cognate amino acids such as alanine and cysteine, to avoid such errors it has two additional distinct editing activities against alanine. One activity is designated as 'pretransfer' editing and involves the tRNA(Pro)-independent hydrolysis of activated Ala-AMP. The other activity is designated 'posttransfer' editing and involves deacylation of mischarged Ala-tRNA(Pro). The misacylated Cys-tRNA(Pro) is not edited by ProRS. This is Proline--tRNA ligase from Streptococcus pyogenes serotype M18 (strain MGAS8232).